A 262-amino-acid polypeptide reads, in one-letter code: Adenosylcobinamide-GDP ribazoletransferase (262 aa).

The next 6 membrane-spanning stretches (helical) occupy residues 43–63 (YFGL…WLTQ), 66–86 (LPAG…TGGF), 120–140 (GALA…ELAL), 146–166 (AGSA…SIIF), 191–211 (LLIL…LAAL), and 242–262 (AAQQ…GNIL).

It belongs to the CobS family. Mg(2+) serves as cofactor.

It is found in the cell inner membrane. The enzyme catalyses alpha-ribazole + adenosylcob(III)inamide-GDP = adenosylcob(III)alamin + GMP + H(+). It carries out the reaction alpha-ribazole 5'-phosphate + adenosylcob(III)inamide-GDP = adenosylcob(III)alamin 5'-phosphate + GMP + H(+). It functions in the pathway cofactor biosynthesis; adenosylcobalamin biosynthesis; adenosylcobalamin from cob(II)yrinate a,c-diamide: step 7/7. Functionally, joins adenosylcobinamide-GDP and alpha-ribazole to generate adenosylcobalamin (Ado-cobalamin). Also synthesizes adenosylcobalamin 5'-phosphate from adenosylcobinamide-GDP and alpha-ribazole 5'-phosphate. The sequence is that of Adenosylcobinamide-GDP ribazoletransferase from Shewanella baltica (strain OS155 / ATCC BAA-1091).